The sequence spans 398 residues: Succinate--CoA ligase [ADP-forming] subunit beta (398 aa).

The 246-residue stretch at 9 to 254 folds into the ATP-grasp domain; that stretch reads KRLLHTYGAP…LTEEDPKEIE (246 aa). ATP-binding positions include Lys-46, 53-55, Glu-109, Ala-112, and Glu-117; that span reads GRG. Residues Asn-209 and Asp-223 each coordinate Mg(2+). Substrate is bound by residues Asn-274 and 331–333; that span reads GIM.

This sequence belongs to the succinate/malate CoA ligase beta subunit family. In terms of assembly, heterotetramer of two alpha and two beta subunits. Requires Mg(2+) as cofactor.

It carries out the reaction succinate + ATP + CoA = succinyl-CoA + ADP + phosphate. It catalyses the reaction GTP + succinate + CoA = succinyl-CoA + GDP + phosphate. Its pathway is carbohydrate metabolism; tricarboxylic acid cycle; succinate from succinyl-CoA (ligase route): step 1/1. Succinyl-CoA synthetase functions in the citric acid cycle (TCA), coupling the hydrolysis of succinyl-CoA to the synthesis of either ATP or GTP and thus represents the only step of substrate-level phosphorylation in the TCA. The beta subunit provides nucleotide specificity of the enzyme and binds the substrate succinate, while the binding sites for coenzyme A and phosphate are found in the alpha subunit. In Brucella abortus (strain S19), this protein is Succinate--CoA ligase [ADP-forming] subunit beta.